The following is a 289-amino-acid chain: Acetyl-coenzyme A carboxylase carboxyl transferase subunit beta 2 (289 aa).

The 265-residue stretch at 25-289 folds into the CoA carboxyltransferase N-terminal domain; it reads VWTKCPSCDQ…TNTSIRLEVK (265 aa). Cysteine 29, cysteine 32, cysteine 48, and cysteine 51 together coordinate Zn(2+). The C4-type zinc finger occupies 29 to 51; that stretch reads CPSCDQVLYRIALKENLEVCPKC.

It belongs to the AccD/PCCB family. In terms of assembly, acetyl-CoA carboxylase is a heterohexamer composed of biotin carboxyl carrier protein (AccB), biotin carboxylase (AccC) and two subunits each of ACCase subunit alpha (AccA) and ACCase subunit beta (AccD). It depends on Zn(2+) as a cofactor.

It localises to the cytoplasm. It catalyses the reaction N(6)-carboxybiotinyl-L-lysyl-[protein] + acetyl-CoA = N(6)-biotinyl-L-lysyl-[protein] + malonyl-CoA. The protein operates within lipid metabolism; malonyl-CoA biosynthesis; malonyl-CoA from acetyl-CoA: step 1/1. Its function is as follows. Component of the acetyl coenzyme A carboxylase (ACC) complex. Biotin carboxylase (BC) catalyzes the carboxylation of biotin on its carrier protein (BCCP) and then the CO(2) group is transferred by the transcarboxylase to acetyl-CoA to form malonyl-CoA. The chain is Acetyl-coenzyme A carboxylase carboxyl transferase subunit beta 2 from Vibrio parahaemolyticus serotype O3:K6 (strain RIMD 2210633).